Here is a 185-residue protein sequence, read N- to C-terminus: Elongation factor P (185 aa).

It belongs to the elongation factor P family.

It is found in the cytoplasm. Its pathway is protein biosynthesis; polypeptide chain elongation. Functionally, involved in peptide bond synthesis. Stimulates efficient translation and peptide-bond synthesis on native or reconstituted 70S ribosomes in vitro. Probably functions indirectly by altering the affinity of the ribosome for aminoacyl-tRNA, thus increasing their reactivity as acceptors for peptidyl transferase. The protein is Elongation factor P of Picosynechococcus sp. (strain ATCC 27264 / PCC 7002 / PR-6) (Agmenellum quadruplicatum).